Reading from the N-terminus, the 117-residue chain is Large ribosomal subunit protein uL23 (117 aa).

The protein belongs to the universal ribosomal protein uL23 family. Part of the 50S ribosomal subunit. Contacts protein L29, and trigger factor when it is bound to the ribosome.

One of the early assembly proteins it binds 23S rRNA. One of the proteins that surrounds the polypeptide exit tunnel on the outside of the ribosome. Forms the main docking site for trigger factor binding to the ribosome. In Ruminiclostridium cellulolyticum (strain ATCC 35319 / DSM 5812 / JCM 6584 / H10) (Clostridium cellulolyticum), this protein is Large ribosomal subunit protein uL23.